Consider the following 489-residue polypeptide: Dihydropyrimidinase 1 (489 aa).

H61, H63, and K156 together coordinate Zn(2+). Residue K156 is modified to N6-carboxylysine. Residue Y161 coordinates substrate. Zn(2+) is bound by residues H189 and H245. Position 295 (S295) interacts with substrate. Zn(2+) is bound at residue D323. N344 lines the substrate pocket.

This sequence belongs to the metallo-dependent hydrolases superfamily. Hydantoinase/dihydropyrimidinase family. As to quaternary structure, homotetramer. Zn(2+) is required as a cofactor. Post-translationally, carboxylation allows a single lysine to coordinate two zinc ions. As to expression, in L1-L2 larvae, expressed in body hypodermal cells, hemidesmosomes and in a neuronal cell between the pharynx and ring neuropil. In adults, expression is seen in body hypodermal cells and pharynx.

The protein localises to the nucleus. It catalyses the reaction 5,6-dihydrouracil + H2O = 3-(carbamoylamino)propanoate + H(+). The protein is Dihydropyrimidinase 1 (dhp-1) of Caenorhabditis elegans.